Here is a 326-residue protein sequence, read N- to C-terminus: tRNA uridine(34) hydroxylase (326 aa).

The Rhodanese domain maps to 123-217; it reads SDPDVLLVDT…YLEEVPEENS (95 aa). Cys-177 functions as the Cysteine persulfide intermediate in the catalytic mechanism. A compositionally biased stretch (basic and acidic residues) spans 276 to 320; the sequence is EEQKSRFREREKQVQLANERGETHVGGDAAKLIEQRKQEKKEKKQ. A disordered region spans residues 276 to 326; the sequence is EEQKSRFREREKQVQLANERGETHVGGDAAKLIEQRKQEKKEKKQQQRSSK.

The protein belongs to the TrhO family.

It carries out the reaction uridine(34) in tRNA + AH2 + O2 = 5-hydroxyuridine(34) in tRNA + A + H2O. Functionally, catalyzes oxygen-dependent 5-hydroxyuridine (ho5U) modification at position 34 in tRNAs. The chain is tRNA uridine(34) hydroxylase from Aliivibrio salmonicida (strain LFI1238) (Vibrio salmonicida (strain LFI1238)).